Here is a 297-residue protein sequence, read N- to C-terminus: ATP synthase gamma chain (297 aa).

This sequence belongs to the ATPase gamma chain family. In terms of assembly, F-type ATPases have 2 components, CF(1) - the catalytic core - and CF(0) - the membrane proton channel. CF(1) has five subunits: alpha(3), beta(3), gamma(1), delta(1), epsilon(1). CF(0) has three main subunits: a, b and c.

The protein localises to the cell membrane. Produces ATP from ADP in the presence of a proton gradient across the membrane. The gamma chain is believed to be important in regulating ATPase activity and the flow of protons through the CF(0) complex. This chain is ATP synthase gamma chain, found in Renibacterium salmoninarum (strain ATCC 33209 / DSM 20767 / JCM 11484 / NBRC 15589 / NCIMB 2235).